We begin with the raw amino-acid sequence, 211 residues long: LexA repressor (211 aa).

The segment at residues 27 to 47 (QTEIARAFGFKGVRAAQYHLE) is a DNA-binding region (H-T-H motif). Residues S131 and K168 each act as for autocatalytic cleavage activity in the active site.

This sequence belongs to the peptidase S24 family. In terms of assembly, homodimer.

It catalyses the reaction Hydrolysis of Ala-|-Gly bond in repressor LexA.. Functionally, represses a number of genes involved in the response to DNA damage (SOS response), including recA and lexA. In the presence of single-stranded DNA, RecA interacts with LexA causing an autocatalytic cleavage which disrupts the DNA-binding part of LexA, leading to derepression of the SOS regulon and eventually DNA repair. This is LexA repressor from Stenotrophomonas maltophilia (strain R551-3).